Consider the following 410-residue polypeptide: Neuroserpin (410 aa).

Positions M1–V16 are cleaved as a signal peptide. Phosphoserine is present on S83. N157, N321, and N401 each carry an N-linked (GlcNAc...) asparagine glycan. O-linked (Xyl...) (chondroitin sulfate) serine glycosylation is present at S403.

Belongs to the serpin family. As to expression, detected in adult pituitary and adrenal gland.

Its subcellular location is the secreted. The protein localises to the cytoplasmic vesicle. It is found in the secretory vesicle lumen. The protein resides in the perikaryon. Serine protease inhibitor that inhibits plasminogen activators and plasmin but not thrombin. May be involved in the formation or reorganization of synaptic connections as well as for synaptic plasticity in the adult nervous system. May protect neurons from cell damage by tissue-type plasminogen activator. The polypeptide is Neuroserpin (Serpini1) (Rattus norvegicus (Rat)).